Here is a 412-residue protein sequence, read N- to C-terminus: Protein arginine N-methyltransferase 2 (412 aa).

Over residues 48-65 the composition is skewed to basic and acidic residues; sequence EKNRNGDKEFRESTDDNK. Disordered stretches follow at residues 48 to 69 and 169 to 189; these read EKNRNGDKEFRESTDDNKTSNT and SVQTAVDGQKEESVGSDDDAT. 2 positions are modified to phosphoserine: serine 181 and serine 184. Residues 189-412 enclose the RMT2 domain; sequence TAANQQVYLK…YYYHPRITFA (224 aa). S-adenosyl-L-methionine contacts are provided by residues tyrosine 196, methionine 226, 250–255, 271–273, 298–299, and aspartate 319; these read FGMGII, EAH, and WQ.

The protein belongs to the class I-like SAM-binding methyltransferase superfamily. RMT2 methyltransferase family. As to quaternary structure, monomer. Interacts with nucleoporins NUP49, NUP57 and NUP100.

It is found in the cytoplasm. The protein resides in the nucleus. Its function is as follows. S-adenosyl-L-methionine-dependent protein-arginine N-methyltransferase that methylates the delta-nitrogen atom of arginine residues to form N5-methylarginine (type IV) in target proteins. Monomethylates ribosomal protein L12 (RPL12A/RPL12B) at 'Arg-67'. In Saccharomyces cerevisiae (strain ATCC 204508 / S288c) (Baker's yeast), this protein is Protein arginine N-methyltransferase 2.